We begin with the raw amino-acid sequence, 520 residues long: Ribonuclease Y (520 aa).

The chain crosses the membrane as a helical span at residues 1–21 (MEILIIVIAAVVGLALGFAIA). Residues 210-295 (CVSVFNLESD…EVVKKTRKQI (86 aa)) form the KH domain. Residues 336 to 429 (LLQHSREVAK…VQVCDAISGA (94 aa)) enclose the HD domain.

It belongs to the RNase Y family.

The protein resides in the cell membrane. In terms of biological role, endoribonuclease that initiates mRNA decay. The chain is Ribonuclease Y from Christiangramia forsetii (strain DSM 17595 / CGMCC 1.15422 / KT0803) (Gramella forsetii).